The chain runs to 137 residues: Small ribosomal subunit protein uS12 (137 aa).

A disordered region spans residues 1-20 (MPTTNQLVNRGRTSKVQKQN). Asp-102 is subject to 3-methylthioaspartic acid.

It belongs to the universal ribosomal protein uS12 family. Part of the 30S ribosomal subunit. Contacts proteins S8 and S17. May interact with IF1 in the 30S initiation complex.

With S4 and S5 plays an important role in translational accuracy. In terms of biological role, interacts with and stabilizes bases of the 16S rRNA that are involved in tRNA selection in the A site and with the mRNA backbone. Located at the interface of the 30S and 50S subunits, it traverses the body of the 30S subunit contacting proteins on the other side and probably holding the rRNA structure together. The combined cluster of proteins S8, S12 and S17 appears to hold together the shoulder and platform of the 30S subunit. This is Small ribosomal subunit protein uS12 from Mycoplasmopsis synoviae (strain 53) (Mycoplasma synoviae).